Here is a 309-residue protein sequence, read N- to C-terminus: Ribose-phosphate pyrophosphokinase (309 aa).

Residues 42-44 (DEE) and 102-103 (RQ) each bind ATP. The Mg(2+) site is built by histidine 136 and aspartate 175. The active site involves lysine 199. Residues arginine 201, aspartate 226, and 230-234 (STGGT) contribute to the D-ribose 5-phosphate site.

It belongs to the ribose-phosphate pyrophosphokinase family. Class III (archaeal) subfamily. Requires Mg(2+) as cofactor.

The protein localises to the cytoplasm. The enzyme catalyses D-ribose 5-phosphate + ATP = 5-phospho-alpha-D-ribose 1-diphosphate + AMP + H(+). It functions in the pathway metabolic intermediate biosynthesis; 5-phospho-alpha-D-ribose 1-diphosphate biosynthesis; 5-phospho-alpha-D-ribose 1-diphosphate from D-ribose 5-phosphate (route I): step 1/1. Functionally, involved in the biosynthesis of the central metabolite phospho-alpha-D-ribosyl-1-pyrophosphate (PRPP) via the transfer of pyrophosphoryl group from ATP to 1-hydroxyl of ribose-5-phosphate (Rib-5-P). The protein is Ribose-phosphate pyrophosphokinase of Aeropyrum pernix (strain ATCC 700893 / DSM 11879 / JCM 9820 / NBRC 100138 / K1).